A 520-amino-acid chain; its full sequence is ATP-dependent RNA helicase CshA (520 aa).

The Q motif motif lies at 2–30; it reads TKFSEFGLDEKIVKSVNRMGFEEATPIQE. A Helicase ATP-binding domain is found at 33 to 203; that stretch reads IPLGLEGKDL…ERFMHSPELI (171 aa). An ATP-binding site is contributed by 46–53; it reads AQTGTGKT. The short motif at 151–154 is the DEAD box element; sequence DEAD. Residues 214-374 enclose the Helicase C-terminal domain; the sequence is LIEQFFVKVH…PLQAPTWDEA (161 aa). The segment covering 428-439 has biased composition (basic and acidic residues); that stretch reads KTPVHITEERPL. A disordered region spans residues 428 to 520; sequence KTPVHITEER…NKGNYSQKSK (93 aa). Composition is skewed to gly residues over residues 442–468 and 482–496; these read RGGG…GKGG and SGGG…GGGG.

The protein belongs to the DEAD box helicase family. CshA subfamily. Oligomerizes, may be a member of the RNA degradosome.

The protein resides in the cytoplasm. The enzyme catalyses ATP + H2O = ADP + phosphate + H(+). DEAD-box RNA helicase possibly involved in RNA degradation. Unwinds dsRNA in both 5'- and 3'-directions, has RNA-dependent ATPase activity. Involved in cold tolerance, motility and alcohol tolerance. The sequence is that of ATP-dependent RNA helicase CshA from Listeria monocytogenes serovar 1/2a (strain ATCC BAA-679 / EGD-e).